Consider the following 85-residue polypeptide: Probable Thioredoxin (85 aa).

In terms of domain architecture, Glutaredoxin spans 2–85; the sequence is VVKIEVFTSP…LFEAISDEIE (84 aa). A disulfide bridge links Cys13 with Cys16.

The protein belongs to the glutaredoxin family.

It is found in the cytoplasm. Functionally, does not function as a glutathione-disulfide oxidoreductase in the presence of glutathione and glutathione reductase. May be a component of a ribonucleotide-reducing system distinct from the previously described systems utilizing thioredoxin or glutaredoxin. This chain is Probable Thioredoxin, found in Methanothermobacter marburgensis (strain ATCC BAA-927 / DSM 2133 / JCM 14651 / NBRC 100331 / OCM 82 / Marburg) (Methanobacterium thermoautotrophicum).